A 200-amino-acid polypeptide reads, in one-letter code: Proteasome subunit beta 2 (200 aa).

A propeptide (removed in mature form; by autocatalysis) is located at residue M1. T2 functions as the Nucleophile in the catalytic mechanism.

This sequence belongs to the peptidase T1B family. In terms of assembly, the 20S proteasome core is composed of 14 alpha and 14 beta subunits that assemble into four stacked heptameric rings, resulting in a barrel-shaped structure. The two inner rings, each composed of seven catalytic beta subunits, are sandwiched by two outer rings, each composed of seven alpha subunits. The catalytic chamber with the active sites is on the inside of the barrel. Has a gated structure, the ends of the cylinder being occluded by the N-termini of the alpha-subunits. Is capped at one or both ends by the proteasome regulatory ATPase, PAN.

It localises to the cytoplasm. It carries out the reaction Cleavage of peptide bonds with very broad specificity.. Its activity is regulated as follows. The formation of the proteasomal ATPase PAN-20S proteasome complex, via the docking of the C-termini of PAN into the intersubunit pockets in the alpha-rings, triggers opening of the gate for substrate entry. Interconversion between the open-gate and close-gate conformations leads to a dynamic regulation of the 20S proteasome proteolysis activity. Functionally, component of the proteasome core, a large protease complex with broad specificity involved in protein degradation. The chain is Proteasome subunit beta 2 from Pyrobaculum islandicum (strain DSM 4184 / JCM 9189 / GEO3).